Consider the following 363-residue polypeptide: Probable cinnamyl alcohol dehydrogenase 6 (363 aa).

C51 is a binding site for Zn(2+). S53 lines the NADP(+) pocket. Zn(2+)-binding residues include H73, E74, C104, C107, C110, C118, and C167. NADP(+) contacts are provided by residues S171, 192–197, 215–220, T255, G279, and 302–304; these read GLGGLG, SSTTGK, and SGI.

It belongs to the zinc-containing alcohol dehydrogenase family. Homodimer. Requires Zn(2+) as cofactor. Expressed in the primary and lateral roots, and root caps. Expressed in the hypocotyl, cotyledon veins and hydathodes. In stems, expressed in the vascular cambium, interfascicular cambium and developing xylem. Expressed in the style, anthers, stamen filaments, vascular tissues of sepals, stigmatic regions in flowers, and abscission and style regions of siliques.

It carries out the reaction (E)-cinnamyl alcohol + NADP(+) = (E)-cinnamaldehyde + NADPH + H(+). The catalysed reaction is (E)-coniferol + NADP(+) = (E)-coniferaldehyde + NADPH + H(+). The enzyme catalyses (E)-sinapyl alcohol + NADP(+) = (E)-sinapaldehyde + NADPH + H(+). It catalyses the reaction (E)-4-coumaroyl alcohol + NADP(+) = (E)-4-coumaraldehyde + NADPH + H(+). It carries out the reaction (E)-caffeyl alcohol + NADP(+) = (E)-caffeyl aldehyde + NADPH + H(+). It functions in the pathway aromatic compound metabolism; phenylpropanoid biosynthesis. Involved in lignin biosynthesis. Catalyzes the final step specific for the production of lignin monomers. Catalyzes the NADPH-dependent reduction of coniferaldehyde, 5-hydroxyconiferaldehyde, sinapaldehyde, 4-coumaraldehyde and caffeyl aldehyde to their respective alcohols. The sequence is that of Probable cinnamyl alcohol dehydrogenase 6 (CAD6) from Arabidopsis thaliana (Mouse-ear cress).